The following is a 305-amino-acid chain: UDP-N-acetylenolpyruvoylglucosamine reductase (305 aa).

The region spanning 37–202 is the FAD-binding PCMH-type domain; sequence GIGGPARFLA…LSVTFNLEPK (166 aa). Residue arginine 183 is part of the active site.

Belongs to the MurB family. It depends on FAD as a cofactor.

Its subcellular location is the cytoplasm. The enzyme catalyses UDP-N-acetyl-alpha-D-muramate + NADP(+) = UDP-N-acetyl-3-O-(1-carboxyvinyl)-alpha-D-glucosamine + NADPH + H(+). Its pathway is cell wall biogenesis; peptidoglycan biosynthesis. In terms of biological role, cell wall formation. The protein is UDP-N-acetylenolpyruvoylglucosamine reductase of Rhodopirellula baltica (strain DSM 10527 / NCIMB 13988 / SH1).